We begin with the raw amino-acid sequence, 407 residues long: Protease ElaD (407 aa).

H231 is an active-site residue. C317 serves as the catalytic Nucleophile.

Belongs to the peptidase C79 family.

Protease that can act as an efficient and specific deubiquitinating enzyme in vitro. Does not possess desumoylating and deneddylating activities. The physiological substrate is unknown. This is Protease ElaD (elaD) from Escherichia coli O157:H7.